Here is a 621-residue protein sequence, read N- to C-terminus: Probable potassium transport system protein Kup 2 (621 aa).

The next 12 membrane-spanning stretches (helical) occupy residues 9–29 (MAGL…TSPL), 48–68 (IFGI…VKYV), 101–121 (IVLL…ITPA), 136–156 (SGME…LFLL), 164–184 (VGLM…ILGL), 210–230 (GFHA…AEAL), 246–266 (WFSL…ALLM), 275–295 (PFFL…ATLA), 336–356 (IYMP…VLTF), 364–384 (AAYG…FFVV), 393–413 (LPLA…FFAA), and 418–438 (VADG…LMST).

Belongs to the HAK/KUP transporter (TC 2.A.72) family.

The protein resides in the cell inner membrane. It carries out the reaction K(+)(in) + H(+)(in) = K(+)(out) + H(+)(out). Its function is as follows. Transport of potassium into the cell. Likely operates as a K(+):H(+) symporter. The protein is Probable potassium transport system protein Kup 2 of Chromobacterium violaceum (strain ATCC 12472 / DSM 30191 / JCM 1249 / CCUG 213 / NBRC 12614 / NCIMB 9131 / NCTC 9757 / MK).